The following is a 315-amino-acid chain: Olfactory receptor 2V1 (315 aa).

Residues 1–31 are Extracellular-facing; that stretch reads MGRWVNQSYTDGFFLLGIFSHSQTDLVLFSA. Residue Asn-6 is glycosylated (N-linked (GlcNAc...) asparagine). The helical transmembrane segment at 32–52 threads the bilayer; sequence VMVVFTVALCGNVLLIFLIYL. Residues 53 to 58 are Cytoplasmic-facing; that stretch reads DAGLHT. A helical membrane pass occupies residues 59–79; sequence PMYFFLSQLSLMDLMLVCNIV. Residues 80-99 are Extracellular-facing; it reads PKMAANFLSGRKSISFVGCG. A disulfide bridge links Cys-98 with Cys-180. Residues 100 to 120 form a helical membrane-spanning segment; that stretch reads IQIGFFVSLVGSEGLLLGLMA. The Cytoplasmic portion of the chain corresponds to 121 to 149; sequence YDRYVAVSHPLHYPILMNQRVCLQITGSS. Residues 150–170 form a helical membrane-spanning segment; it reads WAFGIIDGVIQMVAAMGLPYC. The Extracellular segment spans residues 171–198; the sequence is GSRSVDHFFCEVQALLKLACADTSLFDT. Residues 199–219 traverse the membrane as a helical segment; the sequence is LLFACCVFMLLLPFSIIMASY. The Cytoplasmic portion of the chain corresponds to 220 to 238; sequence ACILGAVLRIRSAQAWKKA. A helical transmembrane segment spans residues 239–259; that stretch reads LATCSSHLTAVTLFYGAAMFM. Residues 260-272 lie on the Extracellular side of the membrane; the sequence is YLRPRRYRAPSHD. Residues 273 to 293 form a helical membrane-spanning segment; it reads KVASIFYTVLTPMLNPLIYSL. The Cytoplasmic portion of the chain corresponds to 294–315; that stretch reads RNGEVMGALRKGLDRCRIGSQH.

This sequence belongs to the G-protein coupled receptor 1 family.

The protein resides in the cell membrane. Functionally, odorant receptor. The chain is Olfactory receptor 2V1 (OR2V1) from Homo sapiens (Human).